Here is a 229-residue protein sequence, read N- to C-terminus: Potassium/proton antiporter CemA (229 aa).

Helical transmembrane passes span Leu7 to Phe27, Ile106 to Met126, and Ile189 to Ile209.

The protein belongs to the CemA family.

It localises to the plastid. Its subcellular location is the chloroplast inner membrane. It catalyses the reaction K(+)(in) + H(+)(out) = K(+)(out) + H(+)(in). In terms of biological role, contributes to K(+)/H(+) antiport activity by supporting proton efflux to control proton extrusion and homeostasis in chloroplasts in a light-dependent manner to modulate photosynthesis. Prevents excessive induction of non-photochemical quenching (NPQ) under continuous-light conditions. Indirectly promotes efficient inorganic carbon uptake into chloroplasts. The chain is Potassium/proton antiporter CemA from Ceratophyllum demersum (Rigid hornwort).